A 387-amino-acid polypeptide reads, in one-letter code: Sialic acid-binding Ig-like lectin 13 (387 aa).

Positions 1 to 15 (MLPLLLPLLWAGALA) are cleaved as a signal peptide. The Ig-like V-type domain occupies 16–138 (LEGIFQLEVP…KDPPLSVHVT (123 aa)). The Extracellular segment spans residues 16 to 341 (LEGIFQLEVP…QRKSGPMAEV (326 aa)). Disulfide bonds link Cys-35–Cys-168, Cys-40–Cys-100, and Cys-162–Cys-211. N-linked (GlcNAc...) asparagine glycosylation occurs at Asn-99. Arg-118 lines the N-acetylneuraminate pocket. The Ig-like C2-type 1 domain maps to 144–227 (PDILIPGALK…AGVTTTRTVR (84 aa)). Residues Asn-229, Asn-236, and Asn-254 are each glycosylated (N-linked (GlcNAc...) asparagine). The region spanning 234–326 (PQNLTLTVFQ…RNPLGSQQVS (93 aa)) is the Ig-like C2-type 2 domain. A disulfide bond links Cys-270 and Cys-314. A helical transmembrane segment spans residues 342–362 (VLVAIGEAAVKILLLFLCLII). Topologically, residues 363 to 387 (LRVKSHRRKAAKAATGVEAAKVVKG) are cytoplasmic.

It belongs to the immunoglobulin superfamily. SIGLEC (sialic acid binding Ig-like lectin) family.

It localises to the membrane. Functionally, putative adhesion molecule that mediates sialic-acid dependent binding to cells. The chain is Sialic acid-binding Ig-like lectin 13 (SIGLEC13) from Pan troglodytes (Chimpanzee).